A 178-amino-acid polypeptide reads, in one-letter code: Acireductone dioxygenase (178 aa).

Fe(2+)-binding residues include H82, H84, E88, and H127. Residues H82, H84, E88, and H127 each contribute to the Ni(2+) site. S157 is modified (phosphoserine).

This sequence belongs to the acireductone dioxygenase (ARD) family. Requires Fe(2+) as cofactor. It depends on Ni(2+) as a cofactor.

The protein localises to the cytoplasm. It is found in the nucleus. The enzyme catalyses 1,2-dihydroxy-5-(methylsulfanyl)pent-1-en-3-one + O2 = 4-methylsulfanyl-2-oxobutanoate + formate + 2 H(+). It catalyses the reaction 1,2-dihydroxy-5-(methylsulfanyl)pent-1-en-3-one + O2 = 3-(methylsulfanyl)propanoate + CO + formate + 2 H(+). It participates in amino-acid biosynthesis; L-methionine biosynthesis via salvage pathway; L-methionine from S-methyl-5-thio-alpha-D-ribose 1-phosphate: step 5/6. Functionally, catalyzes 2 different reactions between oxygen and the acireductone 1,2-dihydroxy-3-keto-5-methylthiopentene (DHK-MTPene) depending upon the metal bound in the active site. Fe-containing acireductone dioxygenase (Fe-ARD) produces formate and 2-keto-4-methylthiobutyrate (KMTB), the alpha-ketoacid precursor of methionine in the methionine recycle pathway. Ni-containing acireductone dioxygenase (Ni-ARD) produces methylthiopropionate, carbon monoxide and formate, and does not lie on the methionine recycle pathway. The polypeptide is Acireductone dioxygenase (adi1) (Schizosaccharomyces pombe (strain 972 / ATCC 24843) (Fission yeast)).